We begin with the raw amino-acid sequence, 197 residues long: Putative peptidyl-prolyl cis-trans isomerase (197 aa).

In terms of domain architecture, PPIase cyclophilin-type spans 14-195 (NEIKVVMHTN…YDVVIESIDV (182 aa)).

The protein belongs to the cyclophilin-type PPIase family.

It carries out the reaction [protein]-peptidylproline (omega=180) = [protein]-peptidylproline (omega=0). Its function is as follows. PPIases accelerate the folding of proteins. It catalyzes the cis-trans isomerization of proline imidic peptide bonds in oligopeptides. This chain is Putative peptidyl-prolyl cis-trans isomerase, found in Staphylococcus epidermidis (strain ATCC 35984 / DSM 28319 / BCRC 17069 / CCUG 31568 / BM 3577 / RP62A).